A 502-amino-acid polypeptide reads, in one-letter code: Arginine-specific demethylase JMJ22 (502 aa).

A disordered region spans residues 15-45 (KSKSKRLKLHQHEPESLFPEKEVEEEDEDEG). Positions 24-35 (HQHEPESLFPEK) are enriched in basic and acidic residues. One can recognise an F-box domain in the interval 80 to 126 (LGNLQILSDELVLDILGLLGANHLGVLATVTKSFYIFANHEPLWRNL). The region spanning 279–439 (EKVPVLDSEY…NVLEFLKKPN (161 aa)) is the JmjC domain. The Fe cation site is built by His324, Asp326, and His407.

The protein belongs to the JARID1 histone demethylase family. It depends on Fe(2+) as a cofactor. Expressed in inflorescences, roots and siliques, and, at low levels, in leaves and stems.

Its subcellular location is the nucleus. It carries out the reaction N(omega),N(omega)-dimethyl-L-arginyl-[protein] + 2-oxoglutarate + O2 = N(omega)-methyl-L-arginyl-[protein] + formaldehyde + succinate + CO2. Its function is as follows. Histone demethylase that demethylates 'Arg-3' (H4R3me) of histone H4 with a specific activity for H4R3me2. Involved in the positive regulation of gene expression. Together with JMJ20, positively regulates seed germination by promoting the removal of repressive histone arginine methylations (e.g. H4R3me2) at GA3ox1 and GA3ox2 to trigger gibberellic acid (GA) biosynthesis. This is Arginine-specific demethylase JMJ22 from Arabidopsis thaliana (Mouse-ear cress).